The following is a 285-amino-acid chain: SLAM family member 8 (285 aa).

Positions Met1 to Gly22 are cleaved as a signal peptide. The Extracellular portion of the chain corresponds to Ala23–Asp233. Asn85 is a glycosylation site (N-linked (GlcNAc...) asparagine). The Ig-like C2-type domain maps to Pro128–Thr215. A disulfide bond links Cys152 and Cys201. The chain crosses the membrane as a helical span at residues Val234–Trp254. The Cytoplasmic portion of the chain corresponds to His255–Pro285. Residues Lys262–Pro285 are disordered.

In terms of tissue distribution, expressed in lymph node, spleen, thymus and bone marrow.

Its subcellular location is the membrane. Its function is as follows. May play a role in B-lineage commitment and/or modulation of signaling through the B-cell receptor. This chain is SLAM family member 8 (SLAMF8), found in Homo sapiens (Human).